A 285-amino-acid chain; its full sequence is Small ribosomal subunit protein uS3 (285 aa).

The region spanning 39-107 (VREFLKKKLK…PVAVNIEEVR (69 aa)) is the KH type-2 domain. Residues 211 to 285 (GDAPVMRGED…RAAPPAAKGE (75 aa)) form a disordered region. The span at 217 to 241 (RGEDRPEDDRRRRNPRGDRPGDRRG) shows a compositional bias: basic and acidic residues. Positions 242–255 (PGAGRGGPGAGRGP) are enriched in gly residues. Low complexity-rich tracts occupy residues 256–267 (ADGASAAPSGDA) and 276–285 (RAAPPAAKGE).

The protein belongs to the universal ribosomal protein uS3 family. Part of the 30S ribosomal subunit. Forms a tight complex with proteins S10 and S14.

In terms of biological role, binds the lower part of the 30S subunit head. Binds mRNA in the 70S ribosome, positioning it for translation. The polypeptide is Small ribosomal subunit protein uS3 (Leptothrix cholodnii (strain ATCC 51168 / LMG 8142 / SP-6) (Leptothrix discophora (strain SP-6))).